A 169-amino-acid chain; its full sequence is MFSAQQPGPPPPNQPGAPAGLMSTPPGAKNPSSTLVDDLESSFEACFASLVSQDYVNGTDQEEIRTGVEQCIQKFLDVARQTECFFLQKRLQLSVQKPEQVIKEDVSELRNELQRKEALIQKHLTKLRSWQQVLEEINGQHKKTSEMPQGPLAYLEQASANIPAPMKPT.

The disordered stretch occupies residues 1-35; sequence MFSAQQPGPPPPNQPGAPAGLMSTPPGAKNPSSTL. A coiled-coil region spans residues 99 to 137; sequence EQVIKEDVSELRNELQRKEALIQKHLTKLRSWQQVLEEI.

This sequence belongs to the Mediator complex subunit 28 family. Component of the Mediator complex.

It localises to the nucleus. Its function is as follows. Component of the Mediator complex, a coactivator involved in the regulated transcription of nearly all RNA polymerase II-dependent genes. Mediator functions as a bridge to convey information from gene-specific regulatory proteins to the basal RNA polymerase II transcription machinery. Mediator is recruited to promoters by direct interactions with regulatory proteins and serves as a scaffold for the assembly of a functional preinitiation complex with RNA polymerase II and the general transcription factors. In Xenopus tropicalis (Western clawed frog), this protein is Mediator of RNA polymerase II transcription subunit 28 (med28).